A 301-amino-acid polypeptide reads, in one-letter code: Heterogeneous nuclear ribonucleoprotein D-like (301 aa).

RRM domains lie at 29–111 (GKMF…KGKE) and 114–193 (KKVF…QPKE). K42 carries the N6-methyllysine modification. K90 participates in a covalent cross-link: Glycyl lysine isopeptide (Lys-Gly) (interchain with G-Cter in SUMO2). K97 carries the N6-acetyllysine modification. S122 is modified (phosphoserine). Disordered regions lie at residues 194-229 (VYRQQQQQQKGGRGAAAGGRGGARGRGRGQGQNWNQ) and 279-301 (GQQSTYGKASRGGGNHQNNYQPY). Positions 204–223 (GGRGAAAGGRGGARGRGRGQ) are enriched in gly residues. The segment at 223–301 (QGQNWNQGFN…GNHQNNYQPY (79 aa)) is necessary for interaction with TNPO1. Residue R289 is modified to Dimethylated arginine; alternate. Residue R289 is modified to Omega-N-methylarginine; alternate.

Interacts with TNPO1. Interacts with ZNF148. Post-translationally, dimethylation of Arg-289 is probably of the asymmetric type. In terms of tissue distribution, expressed in skeletal muscle, myoblast, myotube, heart, brain, liver, kidney, heart, lung, stomach, small intestine, large intestine, spleen, and testis (at protein level). Expressed in brain, skeletal muscle, heart, lung, liver, stomach, small intestine, large intestine, kidney, spleen and testis.

Its subcellular location is the nucleus. It is found in the cytoplasm. Functionally, acts as a transcriptional regulator. Promotes transcription repression. Promotes transcription activation in differentiated myotubes. Binds to double- and single-stranded DNA sequences. Binds to the transcription suppressor CATR sequence of the COX5B promoter. Binds with high affinity to RNA molecules that contain AU-rich elements (AREs) found within the 3'-UTR of many proto-oncogenes and cytokine mRNAs. Binds both to nuclear and cytoplasmic poly(A) mRNAs. Binds to poly(G) and poly(A), but not to poly(U) or poly(C) RNA homopolymers. Binds to the 5'-ACUAGC-3' RNA consensus sequence. This chain is Heterogeneous nuclear ribonucleoprotein D-like (Hnrnpdl), found in Mus musculus (Mouse).